Here is a 192-residue protein sequence, read N- to C-terminus: Inosine triphosphate pyrophosphatase (192 aa).

Thr-10–Lys-15 contributes to the ITP binding site. Glu-46 provides a ligand contact to Mg(2+). ITP-binding positions include Lys-58, Asp-74–Thr-75, Lys-91, Phe-149–Asp-152, Lys-172, and His-177–Arg-178.

This sequence belongs to the HAM1 NTPase family. In terms of assembly, homodimer. The cofactor is Mg(2+). It depends on Mn(2+) as a cofactor.

The protein resides in the cytoplasm. Its subcellular location is the nucleus. The enzyme catalyses ITP + H2O = IMP + diphosphate + H(+). It catalyses the reaction dITP + H2O = dIMP + diphosphate + H(+). It carries out the reaction XTP + H2O = XMP + diphosphate + H(+). Its function is as follows. Pyrophosphatase that hydrolyzes non-canonical purine nucleotides such as inosine triphosphate (ITP), deoxyinosine triphosphate (dITP) or xanthosine 5'-triphosphate (XTP) to their respective monophosphate derivatives. The enzyme does not distinguish between the deoxy- and ribose forms. Probably excludes non-canonical purines from RNA and DNA precursor pools, thus preventing their incorporation into RNA and DNA and avoiding chromosomal lesions. This Puccinia graminis f. sp. tritici (strain CRL 75-36-700-3 / race SCCL) (Black stem rust fungus) protein is Inosine triphosphate pyrophosphatase.